A 716-amino-acid chain; its full sequence is Tensin-4 (716 aa).

Positions 1-17 are cleaved as a signal peptide; the sequence is MSQVMSSPLLAGGPAVG. Disordered stretches follow at residues 119–274, 301–322, 334–366, and 379–436; these read LPPG…VSML, QSSSRSLESPSSSSSSLNNLGP, VPSNATPSMGQPRATRSPPLAKEHASSCPPSIT, and GFPE…RDMQ. A compositionally biased stretch (basic and acidic residues) spans 138-150; sequence KKKEEPEALDIKY. The span at 197–206 shows a compositional bias: polar residues; the sequence is SSESLIFSGS. Residues 214–228 are compositionally biased toward pro residues; that stretch reads PAPPSAVPSSHPPTS. The residue at position 248 (S248) is a Phosphoserine. Residues 265–274 are compositionally biased toward polar residues; sequence PQLSSRVSML. Residues 402 to 419 are compositionally biased toward polar residues; that stretch reads ATSSSMPCPATRSHSQTL. The SH2 domain occupies 449–556; that stretch reads WFKPSISREQ…ALPCKLVIPQ (108 aa). The 122-residue stretch at 583 to 704 folds into the PTB domain; the sequence is CHALYLSSVS…TLQPASQVIR (122 aa).

Belongs to the PTEN phosphatase protein family. Interacts (via SH2 domain) with Rho GTPase-activating protein DLC1 (via C-terminus); the interaction is independent of DLC1 tyrosine phosphorylation. Interacts with integrin ITGB1; the interaction displaces tensin TNS3 from the ITGB1 cytoplasmic tail and promotes ITGB1 stability. Interacts (via SH2 domain) with E3 ubiquitin-protein ligase CBL (phosphorylated on 'Tyr-782'); the interaction is enhanced in the presence of EGF and reduces interaction of CBL with EGFR. Interacts (via SH2 domain) with receptor tyrosine kinase MET (when phosphorylated); the interaction increases MET protein stability.

Its subcellular location is the cell junction. The protein localises to the focal adhesion. It is found in the cytoplasm. It localises to the cytoskeleton. Its function is as follows. Promotes EGF-induced cell migration by displacing tensin TNS3 from the cytoplasmic tail of integrin ITGB1 which results in dissociation of TNS3 from focal adhesions, disassembly of actin stress fibers and initiation of cell migration. Suppresses ligand-induced degradation of EGFR by reducing EGFR ubiquitination in the presence of EGF. Increases MET protein stability by inhibiting MET endocytosis and subsequent lysosomal degradation which leads to increased cell survival, proliferation and migration. This is Tensin-4 (TNS4) from Bos taurus (Bovine).